Here is a 145-residue protein sequence, read N- to C-terminus: Superoxide dismutase [Mn/Fe] (145 aa).

Positions 10 and 64 each coordinate Fe(3+). The Mn(2+) site is built by histidine 10 and histidine 64. The disordered stretch occupies residues threonine 126–leucine 145.

The protein belongs to the iron/manganese superoxide dismutase family. Mn(2+) is required as a cofactor. Fe(3+) serves as cofactor.

The enzyme catalyses 2 superoxide + 2 H(+) = H2O2 + O2. Destroys superoxide anion radicals which are normally produced within the cells and which are toxic to biological systems. Catalyzes the dismutation of superoxide anion radicals into O2 and H2O2 by successive reduction and oxidation of the transition metal ion at the active site. This chain is Superoxide dismutase [Mn/Fe] (sodA), found in Streptococcus oralis.